The following is a 285-amino-acid chain: MSMNIGATAMSRSSQAYAVETCVPDAYHFSKAQSTGTRFIMMLTAVASGVFAGRVMHSTMSVEMALTGLFVVLAFVGGLLSTWSPCGYSSLSLLRPAGRYSLGAVTRWAPTFFTHAVGYAIGAVVLGGALGGISWLLFADVPLQYAVIGLATLAIGYGLHQFGFLKMPYPQRRAQVPHDARFRFRSSVIGLLYGFSLGMNYLTYVQTPMLYIVTGVALLSGGVKAGIAVIAVFNIGRCLPVAVNFLPVKDQSVQAWLARWQESAVEVDGFLLLAIASAALMLVML.

Transmembrane regions (helical) follow at residues 39–59, 60–80, 119–139, 145–165, 188–208, 212–232, and 265–285; these read FIMMLTAVASGVFAGRVMHST, MSVEMALTGLFVVLAFVGGLL, YAIGAVVLGGALGGISWLLFA, YAVIGLATLAIGYGLHQFGFL, VIGLLYGFSLGMNYLTYVQTP, IVTGVALLSGGVKAGIAVIAV, and VEVDGFLLLAIASAALMLVML.

Its subcellular location is the cell membrane. It participates in one-carbon metabolism; methylamine degradation. The chain is Methylamine utilization protein MauF (mauF) from Methylophilus methylotrophus (Bacterium W3A1).